We begin with the raw amino-acid sequence, 257 residues long: Isoprenyl transferase 1 (257 aa).

The active site involves D37. D37 is a binding site for Mg(2+). Residues 38–41 (GNRR), W42, H54, and 82–84 (STD) each bind substrate. Residue N85 is the Proton acceptor of the active site. Residues F86, R88, R206, and 212–214 (RLS) each bind substrate. E225 serves as a coordination point for Mg(2+).

This sequence belongs to the UPP synthase family. Homodimer. The cofactor is Mg(2+).

Its function is as follows. Catalyzes the condensation of isopentenyl diphosphate (IPP) with allylic pyrophosphates generating different type of terpenoids. In Streptomyces avermitilis (strain ATCC 31267 / DSM 46492 / JCM 5070 / NBRC 14893 / NCIMB 12804 / NRRL 8165 / MA-4680), this protein is Isoprenyl transferase 1.